A 394-amino-acid chain; its full sequence is S-adenosylmethionine synthase (394 aa).

A Mg(2+)-binding site is contributed by E10. H16 lines the ATP pocket. Residue E44 coordinates K(+). L-methionine contacts are provided by E57 and Q100. Residues 168-170, 236-239, D247, 253-254, A270, K274, and K278 each bind ATP; these read DGK, SGRF, and RK. An L-methionine-binding site is contributed by D247. K278 contributes to the L-methionine binding site.

The protein belongs to the AdoMet synthase family. As to quaternary structure, homotetramer. Requires Mn(2+) as cofactor. Mg(2+) serves as cofactor. Co(2+) is required as a cofactor. It depends on K(+) as a cofactor.

It localises to the cytoplasm. It catalyses the reaction L-methionine + ATP + H2O = S-adenosyl-L-methionine + phosphate + diphosphate. It functions in the pathway amino-acid biosynthesis; S-adenosyl-L-methionine biosynthesis; S-adenosyl-L-methionine from L-methionine: step 1/1. Functionally, catalyzes the formation of S-adenosylmethionine from methionine and ATP. The reaction comprises two steps that are both catalyzed by the same enzyme: formation of S-adenosylmethionine (AdoMet) and triphosphate, and subsequent hydrolysis of the triphosphate. The sequence is that of S-adenosylmethionine synthase (METK) from Medicago truncatula (Barrel medic).